Reading from the N-terminus, the 33-residue chain is Beta-amanitin proprotein (33 aa).

Positions 1 to 10 (MSDINATRLP) are excised as a propeptide. A cross-link (cyclopeptide (Ile-Pro)) is located at residues 11-18 (IWGIGCDP). The segment at residues 12–16 (WGIGC) is a cross-link (2'-cysteinyl-6'-hydroxytryptophan sulfoxide (Trp-Cys)). A propeptide spanning residues 19-33 (CVGDDVTAVLTRGEA) is cleaved from the precursor.

Belongs to the MSDIN fungal toxin family. Processed by the macrocyclase-peptidase enzyme POPB to yield a toxic cyclic decapeptide. POPB first removes 10 residues from the N-terminus. Conformational trapping of the remaining peptide forces the enzyme to release this intermediate rather than proceed to macrocyclization. The enzyme rebinds the remaining peptide in a different conformation and catalyzes macrocyclization of the N-terminal 8 residues.

Functionally, toxin belonging to the bicyclic octapeptides amatoxins that acts by binding non-competitively to RNA polymerase II and greatly slowing the elongation of transcripts from target promoters. This is Beta-amanitin proprotein from Amanita pallidorosea.